A 213-amino-acid chain; its full sequence is 3-demethoxyubiquinol 3-hydroxylase (213 aa).

Glu-62, Glu-92, His-95, Glu-144, Glu-176, and His-179 together coordinate Fe cation.

This sequence belongs to the COQ7 family. It depends on Fe cation as a cofactor.

The protein resides in the cell membrane. It catalyses the reaction a 5-methoxy-2-methyl-3-(all-trans-polyprenyl)benzene-1,4-diol + AH2 + O2 = a 3-demethylubiquinol + A + H2O. The protein operates within cofactor biosynthesis; ubiquinone biosynthesis. Functionally, catalyzes the hydroxylation of 2-nonaprenyl-3-methyl-6-methoxy-1,4-benzoquinol during ubiquinone biosynthesis. This Legionella pneumophila subsp. pneumophila (strain Philadelphia 1 / ATCC 33152 / DSM 7513) protein is 3-demethoxyubiquinol 3-hydroxylase.